The sequence spans 682 residues: Methionine--tRNA ligase (682 aa).

Positions 15–25 (PYANGAIHLGH) match the 'HIGH' region motif. Positions 146, 149, 159, and 162 each coordinate Zn(2+). A 'KMSKS' region motif is present at residues 331–335 (KMSKS). Lys334 provides a ligand contact to ATP. Residues 580–682 (DFAKLDLRVA…QGVKPGMQVK (103 aa)) form the tRNA-binding domain.

This sequence belongs to the class-I aminoacyl-tRNA synthetase family. MetG type 1 subfamily. Homodimer. The cofactor is Zn(2+).

Its subcellular location is the cytoplasm. The enzyme catalyses tRNA(Met) + L-methionine + ATP = L-methionyl-tRNA(Met) + AMP + diphosphate. Its function is as follows. Is required not only for elongation of protein synthesis but also for the initiation of all mRNA translation through initiator tRNA(fMet) aminoacylation. The chain is Methionine--tRNA ligase from Pasteurella multocida (strain Pm70).